The chain runs to 276 residues: Orotidine 5'-phosphate decarboxylase (276 aa).

Residues D40, K62–H64, D93–T102, Y228, and R246 each bind substrate. The Proton donor role is filled by K95.

The protein belongs to the OMP decarboxylase family.

The catalysed reaction is orotidine 5'-phosphate + H(+) = UMP + CO2. Its pathway is pyrimidine metabolism; UMP biosynthesis via de novo pathway; UMP from orotate: step 2/2. The sequence is that of Orotidine 5'-phosphate decarboxylase (pyrG) from Penicillium nalgiovense.